Reading from the N-terminus, the 176-residue chain is Peptidoglycan-associated lipoprotein (176 aa).

The first 32 residues, 1–32 (MSRIDTPAASRMQTIARNPVMIALVMTLALAG), serve as a signal peptide directing secretion. Cys33 carries N-palmitoyl cysteine lipidation. Cys33 is lipidated: S-diacylglycerol cysteine. The OmpA-like domain maps to 58–175 (QQDFTVNVGD…RAVTVLGGAG (118 aa)).

Belongs to the Pal lipoprotein family. In terms of assembly, the Tol-Pal system is composed of five core proteins: the inner membrane proteins TolA, TolQ and TolR, the periplasmic protein TolB and the outer membrane protein Pal. They form a network linking the inner and outer membranes and the peptidoglycan layer.

It localises to the cell outer membrane. Its function is as follows. Part of the Tol-Pal system, which plays a role in outer membrane invagination during cell division and is important for maintaining outer membrane integrity. The chain is Peptidoglycan-associated lipoprotein from Rhizobium meliloti (strain 1021) (Ensifer meliloti).